We begin with the raw amino-acid sequence, 472 residues long: ATP-dependent rRNA helicase rrp3 (472 aa).

Positions 1–52 (MRDVKKRKIAHEAPEHGSDTESTSSHKSVAQQDDPLETQDEATATESRPAPK) are disordered. Basic and acidic residues predominate over residues 10-19 (AHEAPEHGSD). The segment covering 20 to 31 (TESTSSHKSVAQ) has biased composition (polar residues). The short motif at 52-80 (KSFKDLGIIDQLCEACETMGYKAPTPIQA) is the Q motif element. Residues 83–254 (IPLALQGRDL…RASLSNPLRV (172 aa)) enclose the Helicase ATP-binding domain. 96–103 (AETGSGKT) provides a ligand contact to ATP. The short motif at 202 to 205 (DEAD) is the DEAD box element. The Helicase C-terminal domain occupies 282 to 426 (YLVYLLNEFV…EYELEKDEVM (145 aa)). Positions 444 to 472 (KNFDEKRGTKAKKFGKGKRSRDEMDQEEG) are disordered. Over residues 452–462 (TKAKKFGKGKR) the composition is skewed to basic residues.

This sequence belongs to the DEAD box helicase family. DDX47/RRP3 subfamily. As to quaternary structure, interacts with the SSU processome.

It is found in the nucleus. The catalysed reaction is ATP + H2O = ADP + phosphate + H(+). Its function is as follows. ATP-dependent rRNA helicase required for pre-ribosomal RNA processing. Involved in the maturation of the 35S-pre-rRNA and to its cleavage to mature 18S rRNA. The sequence is that of ATP-dependent rRNA helicase rrp3 from Aspergillus fumigatus (strain ATCC MYA-4609 / CBS 101355 / FGSC A1100 / Af293) (Neosartorya fumigata).